The primary structure comprises 66 residues: Large ribosomal subunit protein bL35 (66 aa).

A compositionally biased stretch (basic residues) spans 1–14; the sequence is MPKMKTKSAAKKRF. Positions 1–34 are disordered; that stretch reads MPKMKTKSAAKKRFSMTATGKVKAGPAGKRHGMI.

The protein belongs to the bacterial ribosomal protein bL35 family.

This chain is Large ribosomal subunit protein bL35, found in Paracoccus denitrificans (strain Pd 1222).